Here is a 190-residue protein sequence, read N- to C-terminus: Shikimate kinase (190 aa).

An ATP-binding site is contributed by 15 to 20; it reads GSGKST. S19 contacts Mg(2+). Substrate is bound by residues D37, R61, and G83. R121 provides a ligand contact to ATP. Residue R148 participates in substrate binding.

This sequence belongs to the shikimate kinase family. As to quaternary structure, monomer. The cofactor is Mg(2+).

It localises to the cytoplasm. It carries out the reaction shikimate + ATP = 3-phosphoshikimate + ADP + H(+). Its pathway is metabolic intermediate biosynthesis; chorismate biosynthesis; chorismate from D-erythrose 4-phosphate and phosphoenolpyruvate: step 5/7. Catalyzes the specific phosphorylation of the 3-hydroxyl group of shikimic acid using ATP as a cosubstrate. The chain is Shikimate kinase from Chlorobium chlorochromatii (strain CaD3).